We begin with the raw amino-acid sequence, 184 residues long: Large ribosomal subunit protein uL6 (184 aa).

The protein belongs to the universal ribosomal protein uL6 family. In terms of assembly, part of the 50S ribosomal subunit.

Functionally, this protein binds to the 23S rRNA, and is important in its secondary structure. It is located near the subunit interface in the base of the L7/L12 stalk, and near the tRNA binding site of the peptidyltransferase center. The polypeptide is Large ribosomal subunit protein uL6 (Thermomicrobium roseum (strain ATCC 27502 / DSM 5159 / P-2)).